A 20-amino-acid chain; its full sequence is Non-specific lipid-transfer protein-like protein (20 aa).

Belongs to the plant LTP family.

In Jatropha curcas (Barbados nut), this protein is Non-specific lipid-transfer protein-like protein.